The following is a 177-amino-acid chain: Peptide methionine sulfoxide reductase MsrA (177 aa).

Cys-15 is a catalytic residue.

It belongs to the MsrA Met sulfoxide reductase family.

It catalyses the reaction L-methionyl-[protein] + [thioredoxin]-disulfide + H2O = L-methionyl-(S)-S-oxide-[protein] + [thioredoxin]-dithiol. The catalysed reaction is [thioredoxin]-disulfide + L-methionine + H2O = L-methionine (S)-S-oxide + [thioredoxin]-dithiol. Its function is as follows. Has an important function as a repair enzyme for proteins that have been inactivated by oxidation. Catalyzes the reversible oxidation-reduction of methionine sulfoxide in proteins to methionine. The protein is Peptide methionine sulfoxide reductase MsrA of Listeria monocytogenes serotype 4a (strain HCC23).